We begin with the raw amino-acid sequence, 154 residues long: Large ribosomal subunit protein uL30 (154 aa).

It belongs to the universal ribosomal protein uL30 family. In terms of assembly, part of the 50S ribosomal subunit.

This is Large ribosomal subunit protein uL30 from Methanocaldococcus jannaschii (strain ATCC 43067 / DSM 2661 / JAL-1 / JCM 10045 / NBRC 100440) (Methanococcus jannaschii).